A 1028-amino-acid polypeptide reads, in one-letter code: MFTASPMSLSKILARRDWENPGVTQWHRLPAHAPFNSWRDEASARADDNASRKRSLNGDWQFSYYAAPEQVPDSWVTEDCADAVTTPVPSNWQMQGFDTPIYTNDTYPIPVNPPFVPAENPTGCYSLTFEVDEQWLESGQTRIVFDGVNSAFYLWCNGKWMGYSQDSRLPAEFDLSAVLRPGTNRLAVLVLRWCDGSYLEDQDMWRMSGIFRDVSLLHKPHTHIADYHAVTELNADYDRAKLQVEVALAGEQFADCEVAVTLWRDGLSVATVSAKPGSAIIDERGNWAERLNVTLPVKDPALWSAETPELYRLTFALRDGQGEILDVEACDVGFRCVEISNGLLKVNGKPLLIRGVNRHEHHPENGQVMDEATMCRDIELMKQHNFNAVRCSHYPNHPLWYTLCDRYGLYVVDEANIETHGMVPMSRLADDPRWLPAMSERVTRMVLRDRNHPSIIIWSLGNESGHGANHDALYRWVKTTDPTRPVQYEGGGANTAATDIVCPMYARVDQDQPFEAVPKWSLKKWIGMPDETRPLILCEYAHAMGNSFGGFAKYWQAFRNHPRLQGGFVWDWVDQALTKKDDNGNAFWAYGGDFGDTPNDRQFCLNGLVFPDRTPHPALFEAQRAQQFFTFTLVSTSPLVIDVHSDYLFRQCDNEQLRWNIARDGEVLASGEVALTIAPQQTQRIEIDAPEFAAAAGEIWLNVDIVQTAATAWSPADHRCAWDQWQLPAPLYIAPPVEGTAKPDLKVKEDVLEVSHQSQRWHFDRASGNLTQWWNNGTATLLAPLSDNFTRAPLDNDIGVSEATRIDPNAWVERWKAAGMYNLTPRLLLCEGEQLAQAVTITTLHAWESNGKALFLSRKVWKIDRAGVLHGDVQVQVANDIPQPARIGLSCQLAQTPQTASWLGLGPDENYPDRKLAARQGRWTLPLDALHTAYIFPTDNGLRCDTRELTFDTHQMQGDFHFSLSRYSQQQLRDTSHHHLLEAEPGCWLNIDAFHMGVGGDDSWSPSVSPEFILQRREMRYAFSWRQD.

Positions 104 and 203 each coordinate substrate. A Na(+)-binding site is contributed by aspartate 203. Mg(2+) contacts are provided by glutamate 418, histidine 420, and glutamate 463. Substrate is bound by residues glutamate 463 and 539 to 542 (EYAH). Glutamate 463 serves as the catalytic Proton donor. Glutamate 539 serves as the catalytic Nucleophile. Asparagine 599 is a binding site for Mg(2+). The Na(+) site is built by phenylalanine 603 and asparagine 606. Residues asparagine 606 and tryptophan 1004 each coordinate substrate.

It belongs to the glycosyl hydrolase 2 family. Homodimer. Requires Mg(2+) as cofactor. Mn(2+) is required as a cofactor. It depends on Fe cation as a cofactor. Na(+) serves as cofactor. The cofactor is K(+).

The catalysed reaction is Hydrolysis of terminal non-reducing beta-D-galactose residues in beta-D-galactosides.. Its activity is regulated as follows. Completely inhibited by Hg(2+), Cu(2+) Ag(2+), and partially inhibited by Zn(2+), imidazole and EDTA. Activated by Ca(2+), Co(2+), Ni(2+). In terms of biological role, this beta-galactosidase is also able to catalyze glycosyl transfer to a series of acceptors, including hexose, pentose, beta- or alpha-disaccharides, hexahydroxy alcohol, cyclitol, and aromatic glycosides, resulting in the production of galacto-oligosaccharides (GOS). The chain is Beta-galactosidase (lacZ) from Enterobacter agglomerans (Erwinia herbicola).